The sequence spans 378 residues: Cysteine endopeptidase RepA (378 aa).

The signal sequence occupies residues 1 to 24 (MLRCFLVAAAAVALAAAAAAPARA). Positions 25–141 (IPFTESDLSS…SFRYGGDDED (117 aa)) are cleaved as a propeptide — activation peptide. Intrachain disulfides connect Cys164/Cys206, Cys198/Cys239, and Cys297/Cys350. The active site involves Cys167. Catalysis depends on residues His303 and Asn324.

This sequence belongs to the peptidase C1 family.

Its subcellular location is the protein storage vacuole. Its function is as follows. Cysteine endopeptidase that digests in vitro both the acidic and basic subunits of glutelin, the major seed storage protein of rice. The sequence is that of Cysteine endopeptidase RepA from Oryza sativa subsp. japonica (Rice).